The sequence spans 961 residues: Exportin-T (961 aa).

Belongs to the exportin family.

Its subcellular location is the cytoplasm. The protein localises to the nucleus. Its function is as follows. Mediates the nuclear export of aminoacylated tRNAs. The protein is Exportin-T (xpot) of Danio rerio (Zebrafish).